The chain runs to 84 residues: Tenecin-1 (84 aa).

Positions 1–19 (MKLTIFALVACFFILQIAA) are cleaved as a signal peptide. A propeptide spanning residues 20–41 (FPLEEAATAEEIEQGEHIRVKR) is cleaved from the precursor. Cystine bridges form between cysteine 44–cysteine 75, cysteine 61–cysteine 81, and cysteine 65–cysteine 83.

The protein belongs to the invertebrate defensin family. Type 1 subfamily.

It is found in the secreted. In terms of biological role, bactericidal protein produced in response to injury. It is cytotoxic to Gram-positive bacteria. The protein is Tenecin-1 of Tenebrio molitor (Yellow mealworm beetle).